The chain runs to 534 residues: Cytochrome c oxidase subunit 1 (534 aa).

The chain crosses the membrane as a helical span at residues 16-36 (VLYFIFAIFCGMAGTAMSLII). The Ca(2+) site is built by glutamate 39, alanine 42, and glycine 44. 6 consecutive transmembrane segments (helical) span residues 57–77 (VLVVGHAVLIIFFLVMPALIG), 101–121 (ISFWCLPPALVCLVTSTLVES), 147–167 (AIFALHLTSISSLLGAINFIV), 182–202 (LPLFVWSIFITAFLLLLSLPV), 235–255 (LFWFFGHPEVYILIIPGFGII), and 267–287 (VFGEVSMVYAMASIGLLGFLV). Histidine 62 serves as a coordination point for Fe(II)-heme a. Histidine 241 provides a ligand contact to Cu cation. The 1'-histidyl-3'-tyrosine (His-Tyr) cross-link spans 241–245 (HPEVY). Residue tyrosine 245 participates in O2 binding. The Cu cation site is built by histidine 290 and histidine 291. The next 2 membrane-spanning stretches (helical) occupy residues 310 to 330 (MIIAIPTGIKIFSWLATIYGG) and 338 to 358 (MLYAIAFLFLFTIGGLTGVAL). Residues histidine 368 and aspartate 369 each contribute to the Mg(2+) site. 2 helical membrane-spanning segments follow: residues 372–392 (YVVGHFHYVLSMGAIFSLFAG) and 412–432 (IQFWLIFVGANVIFLPMHFLG). Position 376 (histidine 376) interacts with heme a3. A Fe(II)-heme a-binding site is contributed by histidine 378. Position 441 (proline 441) interacts with Ca(2+). Residues 452-472 (YVASIGSIIAVFSLFLFIYIL) traverse the membrane as a helical segment.

Belongs to the heme-copper respiratory oxidase family. In terms of assembly, component of the cytochrome c oxidase (complex IV, CIV), a multisubunit enzyme composed of a catalytic core of 3 subunits and several supernumerary subunits. The complex exists as a monomer or a dimer and forms supercomplexes (SCs) in the inner mitochondrial membrane with ubiquinol-cytochrome c oxidoreductase (cytochrome b-c1 complex, complex III, CIII). Heme is required as a cofactor. Cu cation serves as cofactor.

Its subcellular location is the mitochondrion inner membrane. It carries out the reaction 4 Fe(II)-[cytochrome c] + O2 + 8 H(+)(in) = 4 Fe(III)-[cytochrome c] + 2 H2O + 4 H(+)(out). It functions in the pathway energy metabolism; oxidative phosphorylation. In terms of biological role, component of the cytochrome c oxidase, the last enzyme in the mitochondrial electron transport chain which drives oxidative phosphorylation. The respiratory chain contains 3 multisubunit complexes succinate dehydrogenase (complex II, CII), ubiquinol-cytochrome c oxidoreductase (cytochrome b-c1 complex, complex III, CIII) and cytochrome c oxidase (complex IV, CIV), that cooperate to transfer electrons derived from NADH and succinate to molecular oxygen, creating an electrochemical gradient over the inner membrane that drives transmembrane transport and the ATP synthase. Cytochrome c oxidase is the component of the respiratory chain that catalyzes the reduction of oxygen to water. Electrons originating from reduced cytochrome c in the intermembrane space (IMS) are transferred via the dinuclear copper A center (CU(A)) of subunit 2 and heme A of subunit 1 to the active site in subunit 1, a binuclear center (BNC) formed by heme A3 and copper B (CU(B)). The BNC reduces molecular oxygen to 2 water molecules using 4 electrons from cytochrome c in the IMS and 4 protons from the mitochondrial matrix. The chain is Cytochrome c oxidase subunit 1 (COX1) from Kluyveromyces lactis (strain ATCC 8585 / CBS 2359 / DSM 70799 / NBRC 1267 / NRRL Y-1140 / WM37) (Yeast).